The sequence spans 458 residues: UDP-N-acetylmuramate--L-alanine ligase (458 aa).

115–121 contacts ATP; it reads GSHGKTT.

It belongs to the MurCDEF family.

The protein resides in the cytoplasm. It catalyses the reaction UDP-N-acetyl-alpha-D-muramate + L-alanine + ATP = UDP-N-acetyl-alpha-D-muramoyl-L-alanine + ADP + phosphate + H(+). It functions in the pathway cell wall biogenesis; peptidoglycan biosynthesis. In terms of biological role, cell wall formation. This is UDP-N-acetylmuramate--L-alanine ligase from Anaeromyxobacter dehalogenans (strain 2CP-C).